The sequence spans 73 residues: U3-agatoxin-Ao1e (73 aa).

The N-terminal stretch at 1–20 (MRTIISLLLLSAMVFAVIEA) is a signal peptide. A propeptide spanning residues 21-34 (ISLEEGLQLFEGER) is cleaved from the precursor. Intrachain disulfides connect Cys36–Cys52, Cys43–Cys57, Cys51–Cys67, and Cys59–Cys65. Position 71 is an asparagine amide (Asn71).

This sequence belongs to the neurotoxin 07 (Beta/delta-agtx) family. 03 (aga-4) subfamily. Aga sub-subfamily. As to expression, expressed by the venom gland.

Its subcellular location is the secreted. Its function is as follows. Insecticidal neurotoxin that induces an irreversible spastic paralysis when injected into insects. Modifies presynaptic voltage-gated sodium channels (Nav), causing them to open at the normal resting potential of the nerve. This leads to spontaneous release of neurotransmitter and repetitive action potentials in motor neurons. The chain is U3-agatoxin-Ao1e from Agelena orientalis (Funnel-web spider).